A 221-amino-acid chain; its full sequence is 7-cyano-7-deazaguanine synthase (221 aa).

7-17 (LSGGMDSTTLL) contributes to the ATP binding site. The Zn(2+) site is built by Cys183, Cys191, Cys194, and Cys197.

This sequence belongs to the QueC family. Homodimer. The cofactor is Zn(2+).

The catalysed reaction is 7-carboxy-7-deazaguanine + NH4(+) + ATP = 7-cyano-7-deazaguanine + ADP + phosphate + H2O + H(+). The protein operates within purine metabolism; 7-cyano-7-deazaguanine biosynthesis. Catalyzes the ATP-dependent conversion of 7-carboxy-7-deazaguanine (CDG) to 7-cyano-7-deazaguanine (preQ(0)). The polypeptide is 7-cyano-7-deazaguanine synthase (Caldicellulosiruptor bescii (strain ATCC BAA-1888 / DSM 6725 / KCTC 15123 / Z-1320) (Anaerocellum thermophilum)).